Consider the following 209-residue polypeptide: Thiamine-phosphate synthase (209 aa).

4-amino-2-methyl-5-(diphosphooxymethyl)pyrimidine contacts are provided by residues 41 to 45 (QLREK) and N73. The Mg(2+) site is built by D74 and D93. S112 is a 4-amino-2-methyl-5-(diphosphooxymethyl)pyrimidine binding site. 2-[(2R,5Z)-2-carboxy-4-methylthiazol-5(2H)-ylidene]ethyl phosphate is bound at residue 138–140 (TGT). Position 141 (K141) interacts with 4-amino-2-methyl-5-(diphosphooxymethyl)pyrimidine. 2-[(2R,5Z)-2-carboxy-4-methylthiazol-5(2H)-ylidene]ethyl phosphate is bound by residues G168 and 188-189 (VS).

It belongs to the thiamine-phosphate synthase family. It depends on Mg(2+) as a cofactor.

The catalysed reaction is 2-[(2R,5Z)-2-carboxy-4-methylthiazol-5(2H)-ylidene]ethyl phosphate + 4-amino-2-methyl-5-(diphosphooxymethyl)pyrimidine + 2 H(+) = thiamine phosphate + CO2 + diphosphate. It catalyses the reaction 2-(2-carboxy-4-methylthiazol-5-yl)ethyl phosphate + 4-amino-2-methyl-5-(diphosphooxymethyl)pyrimidine + 2 H(+) = thiamine phosphate + CO2 + diphosphate. The enzyme catalyses 4-methyl-5-(2-phosphooxyethyl)-thiazole + 4-amino-2-methyl-5-(diphosphooxymethyl)pyrimidine + H(+) = thiamine phosphate + diphosphate. It functions in the pathway cofactor biosynthesis; thiamine diphosphate biosynthesis; thiamine phosphate from 4-amino-2-methyl-5-diphosphomethylpyrimidine and 4-methyl-5-(2-phosphoethyl)-thiazole: step 1/1. Condenses 4-methyl-5-(beta-hydroxyethyl)thiazole monophosphate (THZ-P) and 2-methyl-4-amino-5-hydroxymethyl pyrimidine pyrophosphate (HMP-PP) to form thiamine monophosphate (TMP). The polypeptide is Thiamine-phosphate synthase (Alkaliphilus oremlandii (strain OhILAs) (Clostridium oremlandii (strain OhILAs))).